Here is a 551-residue protein sequence, read N- to C-terminus: uncharacterized protein (551 aa).

Transmembrane regions (helical) follow at residues 1–21 (MIAY…IVNS), 25–45 (WTYF…LMVS), 99–119 (GALF…FGFN), 124–144 (LGVL…SLMW), 266–286 (FAFL…GVFY), and 490–510 (FLDL…SAED).

Its subcellular location is the cell membrane. This is an uncharacterized protein from Haemophilus influenzae (strain ATCC 51907 / DSM 11121 / KW20 / Rd).